Consider the following 532-residue polypeptide: Putative sodium-dependent excitatory amino acid transporter glt-3 (532 aa).

Residues 1 to 5 are Cytoplasmic-facing; that stretch reads MGMKK. 3 helical membrane passes run 6-26, 46-66, and 83-103; these read DLLL…GFVI, FMQI…ISAL, and IYYM…VSSI. Residues 104–181 lie on the Extracellular side of the membrane; the sequence is HPGDPELIHE…SEVLHKQTLT (78 aa). N-linked (GlcNAc...) asparagine glycosylation is found at Asn164 and Asn169. Transmembrane regions (helical) follow at residues 182-202, 222-242, 264-284, 352-372, and 383-402; these read YTNE…GIIL, IIMR…LSLV, VTVI…LYFL, AVAV…MDLV, and IGSG…LTTV.

The protein belongs to the dicarboxylate/amino acid:cation symporter (DAACS) (TC 2.A.23) family.

The protein resides in the membrane. The polypeptide is Putative sodium-dependent excitatory amino acid transporter glt-3 (glt-3) (Caenorhabditis elegans).